A 413-amino-acid chain; its full sequence is Multifunctional CCA protein (413 aa).

Positions 8 and 11 each coordinate ATP. CTP contacts are provided by Gly-8 and Arg-11. Mg(2+) contacts are provided by Asp-21 and Asp-23. Residues Arg-91, Arg-143, and Arg-146 each coordinate ATP. Arg-91, Arg-143, and Arg-146 together coordinate CTP. The HD domain maps to 232–333 (TGVHVMMVVD…VRFFERSDAL (102 aa)).

The protein belongs to the tRNA nucleotidyltransferase/poly(A) polymerase family. Bacterial CCA-adding enzyme type 1 subfamily. Monomer. Can also form homodimers and oligomers. The cofactor is Mg(2+). Ni(2+) is required as a cofactor.

It catalyses the reaction a tRNA precursor + 2 CTP + ATP = a tRNA with a 3' CCA end + 3 diphosphate. It carries out the reaction a tRNA with a 3' CCA end + 2 CTP + ATP = a tRNA with a 3' CCACCA end + 3 diphosphate. Functionally, catalyzes the addition and repair of the essential 3'-terminal CCA sequence in tRNAs without using a nucleic acid template. Adds these three nucleotides in the order of C, C, and A to the tRNA nucleotide-73, using CTP and ATP as substrates and producing inorganic pyrophosphate. tRNA 3'-terminal CCA addition is required both for tRNA processing and repair. Also involved in tRNA surveillance by mediating tandem CCA addition to generate a CCACCA at the 3' terminus of unstable tRNAs. While stable tRNAs receive only 3'-terminal CCA, unstable tRNAs are marked with CCACCA and rapidly degraded. The sequence is that of Multifunctional CCA protein from Burkholderia ambifaria (strain MC40-6).